The following is a 409-amino-acid chain: Tryptophan synthase beta chain (409 aa).

K104 carries the N6-(pyridoxal phosphate)lysine modification.

This sequence belongs to the TrpB family. In terms of assembly, tetramer of two alpha and two beta chains. It depends on pyridoxal 5'-phosphate as a cofactor.

It catalyses the reaction (1S,2R)-1-C-(indol-3-yl)glycerol 3-phosphate + L-serine = D-glyceraldehyde 3-phosphate + L-tryptophan + H2O. It functions in the pathway amino-acid biosynthesis; L-tryptophan biosynthesis; L-tryptophan from chorismate: step 5/5. Functionally, the beta subunit is responsible for the synthesis of L-tryptophan from indole and L-serine. The chain is Tryptophan synthase beta chain from Trichodesmium erythraeum (strain IMS101).